The sequence spans 103 residues: Small ribosomal subunit protein uS10 (103 aa).

The protein belongs to the universal ribosomal protein uS10 family. As to quaternary structure, part of the 30S ribosomal subunit.

Involved in the binding of tRNA to the ribosomes. This Xylella fastidiosa (strain M12) protein is Small ribosomal subunit protein uS10.